Consider the following 221-residue polypeptide: Iron-sulfur cluster repair protein YtfE (221 aa).

This sequence belongs to the RIC family. YtfE subfamily. Homodimer.

The protein resides in the cytoplasm. Di-iron-containing protein involved in the repair of iron-sulfur clusters damaged by oxidative and nitrosative stress conditions. The sequence is that of Iron-sulfur cluster repair protein YtfE from Yersinia pestis bv. Antiqua (strain Antiqua).